A 413-amino-acid polypeptide reads, in one-letter code: Multifunctional CCA protein (413 aa).

The ATP site is built by Gly-8 and Arg-11. The CTP site is built by Gly-8 and Arg-11. Mg(2+)-binding residues include Asp-21 and Asp-23. Arg-91, Arg-143, and Arg-146 together coordinate ATP. The CTP site is built by Arg-91, Arg-143, and Arg-146. An HD domain is found at 232–333 (TGVHVMMVVD…VRLFERSDAL (102 aa)).

This sequence belongs to the tRNA nucleotidyltransferase/poly(A) polymerase family. Bacterial CCA-adding enzyme type 1 subfamily. In terms of assembly, monomer. Can also form homodimers and oligomers. It depends on Mg(2+) as a cofactor. Requires Ni(2+) as cofactor.

The catalysed reaction is a tRNA precursor + 2 CTP + ATP = a tRNA with a 3' CCA end + 3 diphosphate. The enzyme catalyses a tRNA with a 3' CCA end + 2 CTP + ATP = a tRNA with a 3' CCACCA end + 3 diphosphate. In terms of biological role, catalyzes the addition and repair of the essential 3'-terminal CCA sequence in tRNAs without using a nucleic acid template. Adds these three nucleotides in the order of C, C, and A to the tRNA nucleotide-73, using CTP and ATP as substrates and producing inorganic pyrophosphate. tRNA 3'-terminal CCA addition is required both for tRNA processing and repair. Also involved in tRNA surveillance by mediating tandem CCA addition to generate a CCACCA at the 3' terminus of unstable tRNAs. While stable tRNAs receive only 3'-terminal CCA, unstable tRNAs are marked with CCACCA and rapidly degraded. In Burkholderia lata (strain ATCC 17760 / DSM 23089 / LMG 22485 / NCIMB 9086 / R18194 / 383), this protein is Multifunctional CCA protein.